The primary structure comprises 384 residues: GTPase Obg (384 aa).

The region spanning methionine 1 to leucine 159 is the Obg domain. Disordered stretches follow at residues alanine 20 to tryptophan 46 and histidine 129 to threonine 149. Residues glycine 33–glycine 43 show a composition bias toward gly residues. Positions phenylalanine 130–proline 143 are enriched in polar residues. The OBG-type G domain occupies alanine 160–alanine 348. Residues glycine 166 to serine 173, phenylalanine 191 to histidine 195, aspartate 213 to glycine 216, asparagine 284 to aspartate 287, and serine 329 to leucine 331 each bind GTP. Mg(2+) is bound by residues serine 173 and threonine 193.

The protein belongs to the TRAFAC class OBG-HflX-like GTPase superfamily. OBG GTPase family. As to quaternary structure, monomer. Requires Mg(2+) as cofactor.

It is found in the cytoplasm. Its function is as follows. An essential GTPase which binds GTP, GDP and possibly (p)ppGpp with moderate affinity, with high nucleotide exchange rates and a fairly low GTP hydrolysis rate; the half-life of the GTP-bound state is about 50 minutes. Plays a role in control of the cell cycle, stress response, ribosome biogenesis and in those bacteria that undergo differentiation, in morphogenesis control. The chain is GTPase Obg from Neisseria gonorrhoeae (strain ATCC 700825 / FA 1090).